Here is a 569-residue protein sequence, read N- to C-terminus: Urease subunit beta (569 aa).

Positions 131–569 (GGIDTHIHFI…LSLAQLYNLF (439 aa)) constitute a Urease domain. Ni(2+) contacts are provided by histidine 136, histidine 138, and lysine 219. Position 219 is an N6-carboxylysine (lysine 219). Histidine 221 serves as a coordination point for substrate. Ni(2+) contacts are provided by histidine 248 and histidine 274. Histidine 322 functions as the Proton donor in the catalytic mechanism. Position 362 (aspartate 362) interacts with Ni(2+).

This sequence belongs to the metallo-dependent hydrolases superfamily. Urease alpha subunit family. Heterohexamer of 3 UreA (alpha) and 3 UreB (beta) subunits. It depends on Ni cation as a cofactor. In terms of processing, carboxylation allows a single lysine to coordinate two nickel ions.

It is found in the cytoplasm. It catalyses the reaction urea + 2 H2O + H(+) = hydrogencarbonate + 2 NH4(+). The protein operates within nitrogen metabolism; urea degradation; CO(2) and NH(3) from urea (urease route): step 1/1. The polypeptide is Urease subunit beta (Helicobacter felis (strain ATCC 49179 / CCUG 28539 / NCTC 12436 / CS1)).